The primary structure comprises 154 residues: Transcriptional repressor NrdR (154 aa).

A zinc finger spans residues 3-34 (CPFCSAHDTKVIDSRLVAEGDQVRRRRECQAC). Residues 49 to 139 (PRVIKQDGSR…VYRRFQDLNE (91 aa)) enclose the ATP-cone domain.

Belongs to the NrdR family. Requires Zn(2+) as cofactor.

Negatively regulates transcription of bacterial ribonucleotide reductase nrd genes and operons by binding to NrdR-boxes. The chain is Transcriptional repressor NrdR from Azotobacter vinelandii (strain DJ / ATCC BAA-1303).